Here is a 60-residue protein sequence, read N- to C-terminus: Large ribosomal subunit protein bL32 (60 aa).

It belongs to the bacterial ribosomal protein bL32 family.

This chain is Large ribosomal subunit protein bL32, found in Ehrlichia ruminantium (strain Gardel).